A 315-amino-acid polypeptide reads, in one-letter code: Homoserine kinase (315 aa).

ATP is bound at residue 97 to 107 (PPARGLGSSAT).

This sequence belongs to the GHMP kinase family. Homoserine kinase subfamily.

It localises to the cytoplasm. The enzyme catalyses L-homoserine + ATP = O-phospho-L-homoserine + ADP + H(+). Its pathway is amino-acid biosynthesis; L-threonine biosynthesis; L-threonine from L-aspartate: step 4/5. Its function is as follows. Catalyzes the ATP-dependent phosphorylation of L-homoserine to L-homoserine phosphate. In Prochlorococcus marinus (strain NATL2A), this protein is Homoserine kinase.